Here is a 122-residue protein sequence, read N- to C-terminus: Large ribosomal subunit protein uL18 (122 aa).

This sequence belongs to the universal ribosomal protein uL18 family. In terms of assembly, part of the 50S ribosomal subunit; part of the 5S rRNA/L5/L18/L25 subcomplex. Contacts the 5S and 23S rRNAs.

Its function is as follows. This is one of the proteins that bind and probably mediate the attachment of the 5S RNA into the large ribosomal subunit, where it forms part of the central protuberance. This Mycobacterium leprae (strain TN) protein is Large ribosomal subunit protein uL18.